A 98-amino-acid chain; its full sequence is Alpha-elicitin capsicein (98 aa).

Disulfide bonds link C3–C71, C27–C56, and C51–C95.

The protein belongs to the elicitin family.

Its subcellular location is the secreted. Induces local and distal defense responses (incompatible hypersensitive reaction) in plants from the solanaceae and cruciferae families. Elicits leaf necrosis and causes the accumulation of pathogenesis-related proteins. Might interact with the lipidic molecules of the plasma membrane. The chain is Alpha-elicitin capsicein from Phytophthora capsici.